Reading from the N-terminus, the 265-residue chain is Keratinocyte-associated transmembrane protein 2 (265 aa).

Positions 1–49 are cleaved as a signal peptide; sequence MAAAALKRMRGPAQAKLLPGSAIQALVGLARPLVLALLLVSAALSSVVS. Residues 50-196 lie on the Extracellular side of the membrane; that stretch reads RTDSPSPTVL…MPSSNIEEED (147 aa). The span at 72–96 shows a compositional bias: polar residues; that stretch reads THENQTKPSISQISTTLPPTMSTEK. Disordered stretches follow at residues 72–123 and 135–168; these read THEN…EDPS and SPST…SDDT. An N-linked (GlcNAc...) asparagine glycan is attached at Asn75. A compositionally biased stretch (acidic residues) spans 114-123; sequence EEADNNEDPS. The helical transmembrane segment at 197-217 threads the bilayer; sequence SHFFFHLIIFAFCIAVVYITY. Over 218-265 the chain is Cytoplasmic; sequence HNKRKIFLLVQSRKWRDGLCSKTVEYHRLDQNVNEAMPSLKITNDYTF. Phosphoserine is present on residues Ser229 and Ser256.

The protein localises to the membrane. This chain is Keratinocyte-associated transmembrane protein 2 (KCT2), found in Pongo abelii (Sumatran orangutan).